The chain runs to 465 residues: Putative F-box/LRR-repeat protein At3g28410 (465 aa).

Positions 27 to 73 (ADFINYMPDDILHHILSFIPTDLAMRTSVLSRRWRHVWCETPCLDIK) constitute an F-box domain. 7 LRR repeats span residues 127–155 (VRDF…DVTL), 178–203 (FCQI…TLDT), 207–225 (LERL…DINR), 278–302 (ADRY…TVGE), 332–357 (FVRS…TLHT), 402–427 (TSKL…VVWL), and 447–465 (VETL…QSNC).

The polypeptide is Putative F-box/LRR-repeat protein At3g28410 (Arabidopsis thaliana (Mouse-ear cress)).